Reading from the N-terminus, the 338-residue chain is Uroporphyrinogen decarboxylase (338 aa).

Residues 27–31 (RQAGR), D77, Y151, S203, and H317 each bind substrate.

It belongs to the uroporphyrinogen decarboxylase family. As to quaternary structure, homodimer.

It is found in the cytoplasm. It catalyses the reaction uroporphyrinogen III + 4 H(+) = coproporphyrinogen III + 4 CO2. It participates in porphyrin-containing compound metabolism; protoporphyrin-IX biosynthesis; coproporphyrinogen-III from 5-aminolevulinate: step 4/4. Functionally, catalyzes the decarboxylation of four acetate groups of uroporphyrinogen-III to yield coproporphyrinogen-III. This Wolbachia sp. subsp. Drosophila simulans (strain wRi) protein is Uroporphyrinogen decarboxylase.